A 387-amino-acid polypeptide reads, in one-letter code: Ferrochelatase (387 aa).

The Fe cation site is built by His196 and Glu277.

The protein belongs to the ferrochelatase family.

Its subcellular location is the cytoplasm. It catalyses the reaction heme b + 2 H(+) = protoporphyrin IX + Fe(2+). It participates in porphyrin-containing compound metabolism; protoheme biosynthesis; protoheme from protoporphyrin-IX: step 1/1. Functionally, catalyzes the ferrous insertion into protoporphyrin IX. The polypeptide is Ferrochelatase (Gloeothece citriformis (strain PCC 7424) (Cyanothece sp. (strain PCC 7424))).